The following is a 193-amino-acid chain: MTEYLLLLVGTVLINNFVLVKFLGLCPFMGVSGKLETAIGMGLATTFVMTLASACSYLMEHYILIPLNIAYLRTLAFILVIAVVVQFTEMVIRKSSPTLYRLLGIFLPLITTNCAVLGVALLSINEHHNFIQSIIYGFGAATGFSLVLILFAAMRERLVAADVPTPFRGVSIAMITAGLMSLAFMGFTGLIKI.

A run of 6 helical transmembrane segments spans residues 5 to 25 (LLLL…FLGL), 39 to 59 (IGMG…SYLM), 63 to 83 (ILIP…VIAV), 102 to 122 (LLGI…VALL), 134 to 154 (IIYG…FAAM), and 171 to 191 (SIAM…TGLI).

Belongs to the NqrDE/RnfAE family. As to quaternary structure, the complex is composed of six subunits: RnfA, RnfB, RnfC, RnfD, RnfE and RnfG.

It is found in the cell inner membrane. Its function is as follows. Part of a membrane-bound complex that couples electron transfer with translocation of ions across the membrane. In Aeromonas hydrophila subsp. hydrophila (strain ATCC 7966 / DSM 30187 / BCRC 13018 / CCUG 14551 / JCM 1027 / KCTC 2358 / NCIMB 9240 / NCTC 8049), this protein is Ion-translocating oxidoreductase complex subunit A.